The primary structure comprises 46 residues: Hellethionin-D (46 aa).

4 disulfides stabilise this stretch: Cys3–Cys40, Cys4–Cys32, Cys12–Cys30, and Cys16–Cys26.

This sequence belongs to the plant thionin (TC 1.C.44) family. 4 C-C subfamily.

It localises to the secreted. Its function is as follows. Thionins are small plant proteins which are toxic to animal cells. They seem to exert their toxic effect at the level of the cell membrane. Their precise function is not known. In Helleborus purpurascens (Purple hellebore), this protein is Hellethionin-D.